The sequence spans 392 residues: SH3 domain-binding protein 5-like (392 aa).

Residues 1 to 57 are disordered; sequence MADLKKAAGGRETPQGELRSEVVEDEGPRSPVAEEPGGSGSNSSETKLSPREEEELD. Thr-13 is subject to Phosphothreonine. Basic and acidic residues predominate over residues 18–28; the sequence is LRSEVVEDEGP. Phosphoserine is present on residues Ser-30 and Ser-49. Coiled coils occupy residues 59-140 and 169-272; these read RIQE…YERA and WQEM…EQIH. Residues 275-332 are disordered; that stretch reads RRGLPPHPLGPRRSSPVGAEAGPEGIEDGDSGIEGAEGGGLEEGSSLGPGPGPDTDTL. Positions 317-332 are enriched in low complexity; sequence EGSSLGPGPGPDTDTL. Phosphoserine occurs at positions 342, 349, 357, 361, and 377. The disordered stretch occupies residues 364–392; it reads GQELGAQSRGRRGSDIGVRGGRHQRSVSL. The segment covering 383-392 has biased composition (basic residues); sequence GGRHQRSVSL.

This sequence belongs to the SH3BP5 family.

Its function is as follows. Functions as a guanine nucleotide exchange factor (GEF) for RAB11A. This chain is SH3 domain-binding protein 5-like (Sh3bp5l), found in Mus musculus (Mouse).